The primary structure comprises 82 residues: ATP synthase subunit c, chloroplastic (82 aa).

The next 2 membrane-spanning stretches (helical) occupy residues 4 to 24 (IISA…AIGP) and 57 to 77 (LAFM…LLFA).

Belongs to the ATPase C chain family. F-type ATPases have 2 components, F(1) - the catalytic core - and F(0) - the membrane proton channel. F(1) has five subunits: alpha(3), beta(3), gamma(1), delta(1), epsilon(1). F(0) has four main subunits: a(1), b(1), b'(1) and c(10-14). The alpha and beta chains form an alternating ring which encloses part of the gamma chain. F(1) is attached to F(0) by a central stalk formed by the gamma and epsilon chains, while a peripheral stalk is formed by the delta, b and b' chains.

It is found in the plastid. Its subcellular location is the chloroplast thylakoid membrane. In terms of biological role, f(1)F(0) ATP synthase produces ATP from ADP in the presence of a proton or sodium gradient. F-type ATPases consist of two structural domains, F(1) containing the extramembraneous catalytic core and F(0) containing the membrane proton channel, linked together by a central stalk and a peripheral stalk. During catalysis, ATP synthesis in the catalytic domain of F(1) is coupled via a rotary mechanism of the central stalk subunits to proton translocation. Its function is as follows. Key component of the F(0) channel; it plays a direct role in translocation across the membrane. A homomeric c-ring of between 10-14 subunits forms the central stalk rotor element with the F(1) delta and epsilon subunits. The polypeptide is ATP synthase subunit c, chloroplastic (Antithamnion sp. (Red alga)).